Here is a 437-residue protein sequence, read N- to C-terminus: MNAYQNKNITIIGLGKTGLSCVDYLLSQQANIRVIDTRKNPTGIDKLPQNIPLHTGSLNQEWLLESDMIVISPGLAVKTPEIQTALKAGVEVIGDIELFCRAATKPIVGITGSNGKSTVTTLVYEMAKAAGVKVGMGGNIGIPALSLLNEDCELYVLELSSFQLETTYSLKAAAVTVLNVTEDHMDRYMDLEDYRQAKLRIHHNAKVGVLNNEDRLTFGENENQAKHTVSFAENSADYWLKTENGKQYLMVKDEVILPCEEATLVGRHNYMNILAATALAQAIGINLDSIRTALRHFKGLDHRFQLVHQANGIRWINDSKATNVGSTVAALAGLYIEGKLHLLLGGDGKGADFSELAELINQPHIICYCFGRDGAQLAKFSSQSYLFETMEQAIEFLRPTLQSGDMVLLSPACASLDQFASFEKRGEEFTHLAQYSV.

112-118 (GSNGKST) provides a ligand contact to ATP.

Belongs to the MurCDEF family.

It localises to the cytoplasm. It catalyses the reaction UDP-N-acetyl-alpha-D-muramoyl-L-alanine + D-glutamate + ATP = UDP-N-acetyl-alpha-D-muramoyl-L-alanyl-D-glutamate + ADP + phosphate + H(+). The protein operates within cell wall biogenesis; peptidoglycan biosynthesis. Functionally, cell wall formation. Catalyzes the addition of glutamate to the nucleotide precursor UDP-N-acetylmuramoyl-L-alanine (UMA). This Haemophilus influenzae (strain PittGG) protein is UDP-N-acetylmuramoylalanine--D-glutamate ligase.